The sequence spans 420 residues: MAP kinase-interacting serine/threonine-protein kinase 1 (420 aa).

Residues 1–25 (MGSSEPIPIAESDKRKKKKRKARAT) form a disordered region. Residue Ser-27 is modified to Phosphoserine; by PAK2. The region spanning 37 to 321 (KLTSELLGEG…AAQVLQHPWV (285 aa)) is the Protein kinase domain. Residues 43 to 51 (LGEGANAKV) and Lys-66 contribute to the ATP site. Catalysis depends on Asp-158, which acts as the Proton acceptor. Phosphoserine occurs at positions 168 and 173. Phosphothreonine is present on residues Thr-197, Thr-202, and Thr-332. The disordered stretch occupies residues 386–420 (LSPPSKSRLARRRALAQAGRSGDAPPSPTPTTPAP). Low complexity predominate over residues 400–409 (LAQAGRSGDA). Residues 410-420 (PPSPTPTTPAP) show a composition bias toward pro residues.

The protein belongs to the protein kinase superfamily. CAMK Ser/Thr protein kinase family. Interacts with the C-terminal regions of EIF4G1 and EIF4G2. Also binds to dephosphorylated ERK1 and ERK2, and to the p38 kinases. The cofactor is Mg(2+). In terms of processing, dual phosphorylation of Thr-197 and Thr-202 activates the kinase. Phosphorylation of Thr-332 activates the kinase. MAPK3/ERK1 is one of the kinases which activate MKNK1/MNK1. Phosphorylation by PAK2 leads to a reduced phosphorylation of EIF4G1.

The enzyme catalyses L-seryl-[protein] + ATP = O-phospho-L-seryl-[protein] + ADP + H(+). It catalyses the reaction L-threonyl-[protein] + ATP = O-phospho-L-threonyl-[protein] + ADP + H(+). Its activity is regulated as follows. Phosphorylated and activated by the p38 kinases and kinases in the Erk pathway. May play a role in the response to environmental stress and cytokines. Appears to regulate translation by phosphorylating EIF4E, thus increasing the affinity of this protein for the 7-methylguanosine-containing mRNA cap. The polypeptide is MAP kinase-interacting serine/threonine-protein kinase 1 (MKNK1) (Bos taurus (Bovine)).